Consider the following 42-residue polypeptide: Photosystem I reaction center subunit IX (42 aa).

A helical membrane pass occupies residues 7–27 (FLSTAPVLIMALLTVTAGILI).

It belongs to the PsaJ family.

Its subcellular location is the cellular thylakoid membrane. May help in the organization of the PsaE and PsaF subunits. The protein is Photosystem I reaction center subunit IX of Crocosphaera subtropica (strain ATCC 51142 / BH68) (Cyanothece sp. (strain ATCC 51142)).